The following is a 365-amino-acid chain: MFEINPVKNRIQDLTERSDVLRGYLDYDAKKERLEEVNAELEQPDVWNEPERAQALGKERSSLEAIVDTLDQMSQGLEDVAGLLELAVEAEDEETFNEAVAELDGLEEKLAQLEFRRMFSGEYDSADCYLDIQAGSGGTEAQDWASMLMRMYLRWAEARGFKTEIIEESEGEVAGIKSVTIKIIGDYAYGWLRTETGVHRLVRKSPFDSGGRRHTSFSSAFVYPEVDDDIDIEINPADLRIDVYRASGAGGQHVNRTESAVRITHIPTGLVTQCQNDRSQHKNKDQAMKQMKAKLYELEMQKKNAEKQAMEDNKSDIGWGSQIRSYVLDDSRIKDLRTGVETRNTQAVLDGSLDQFIEASLKAGL.

Glutamine 252 bears the N5-methylglutamine mark.

The protein belongs to the prokaryotic/mitochondrial release factor family. Post-translationally, methylated by PrmC. Methylation increases the termination efficiency of RF2.

Its subcellular location is the cytoplasm. In terms of biological role, peptide chain release factor 2 directs the termination of translation in response to the peptide chain termination codons UGA and UAA. This is Peptide chain release factor 2 from Klebsiella pneumoniae (strain 342).